The primary structure comprises 364 residues: Alanine racemase (364 aa).

Residue lysine 34 is the Proton acceptor; specific for D-alanine of the active site. N6-(pyridoxal phosphate)lysine is present on lysine 34. Arginine 129 serves as a coordination point for substrate. Catalysis depends on tyrosine 259, which acts as the Proton acceptor; specific for L-alanine. Methionine 307 lines the substrate pocket.

It belongs to the alanine racemase family. Requires pyridoxal 5'-phosphate as cofactor.

The catalysed reaction is L-alanine = D-alanine. The protein operates within amino-acid biosynthesis; D-alanine biosynthesis; D-alanine from L-alanine: step 1/1. Functionally, catalyzes the interconversion of L-alanine and D-alanine. May also act on other amino acids. The protein is Alanine racemase (alr) of Coxiella burnetii (strain CbuG_Q212) (Coxiella burnetii (strain Q212)).